The sequence spans 341 residues: MTKIDFENIKILQDKIKDIEIEKNVYDERNIFLKNYLSPLYKELKEMSEEDKKEFGKQLNQYKEMIEDVAEKRINEIKKQKILNIKSEYDINLPADYFQSGGINPIDLVKNEIVKFFKKANFKILTESEVTSVEFNFDSLNIKKDHPARSISDTFYIDDKQLLRVHNTAITSKALRMFNKEEEIKVLSHGNVYRKDDDDATHSHQFNQIDMVWVKKGMSLANLKWLTDKLLKYLFNESIKIRYRISHFPFTEPSFEVDINCFFCDSKDHCSVCKNTKWIEVLGAGLLHPNVLKNANVKKGLSGIAFGIGIDRIAMLKYQIKDIRRLYGNDFSLIESFKGER.

Glu252 serves as a coordination point for Mg(2+).

Belongs to the class-II aminoacyl-tRNA synthetase family. Phe-tRNA synthetase alpha subunit type 1 subfamily. In terms of assembly, tetramer of two alpha and two beta subunits. It depends on Mg(2+) as a cofactor.

Its subcellular location is the cytoplasm. The enzyme catalyses tRNA(Phe) + L-phenylalanine + ATP = L-phenylalanyl-tRNA(Phe) + AMP + diphosphate + H(+). The polypeptide is Phenylalanine--tRNA ligase alpha subunit (Malacoplasma penetrans (strain HF-2) (Mycoplasma penetrans)).